Reading from the N-terminus, the 106-residue chain is MINLTDSAVNAIKSAISSSERRAGGLRVMIEAGGCNGFKYKMGIADEPKPDDTVIDCDGLKVFVDSKSREHLAGTTIDFVLAPESSGFTFHNPNAATNCSCGKSFG.

It belongs to the HesB/IscA family.

This is an uncharacterized protein from Bradyrhizobium diazoefficiens (strain JCM 10833 / BCRC 13528 / IAM 13628 / NBRC 14792 / USDA 110).